The primary structure comprises 200 residues: dITP/XTP pyrophosphatase (200 aa).

8-13 serves as a coordination point for substrate; that stretch reads SQNSSK. The Mg(2+) site is built by E40 and D69. D69 serves as the catalytic Proton acceptor. Residues S70, 154–157, K177, and 182–183 contribute to the substrate site; these read FGYD and HR.

It belongs to the HAM1 NTPase family. In terms of assembly, homodimer. Mg(2+) serves as cofactor.

It carries out the reaction XTP + H2O = XMP + diphosphate + H(+). The enzyme catalyses dITP + H2O = dIMP + diphosphate + H(+). The catalysed reaction is ITP + H2O = IMP + diphosphate + H(+). In terms of biological role, pyrophosphatase that catalyzes the hydrolysis of nucleoside triphosphates to their monophosphate derivatives, with a high preference for the non-canonical purine nucleotides XTP (xanthosine triphosphate), dITP (deoxyinosine triphosphate) and ITP. Seems to function as a house-cleaning enzyme that removes non-canonical purine nucleotides from the nucleotide pool, thus preventing their incorporation into DNA/RNA and avoiding chromosomal lesions. The chain is dITP/XTP pyrophosphatase from Coxiella burnetii (strain RSA 493 / Nine Mile phase I).